We begin with the raw amino-acid sequence, 153 residues long: Insulin-like growth factor 1 (153 aa).

Positions 49–77 are b; sequence GPETLCGAELVDALQFVCGPRGFYFNKPT. 3 cysteine pairs are disulfide-bonded: Cys-54–Cys-96, Cys-66–Cys-109, and Cys-95–Cys-100. Residues 78 to 89 form a c region; that stretch reads GYGSSIRRAPQT. Positions 90 to 110 are a; that stretch reads GIVDECCFRSCDLRRLEMYCA. A d region spans residues 111–118; sequence PLKPTKSA. A propeptide spans 119-153 (e peptide); that stretch reads RSIRAQRHTDMPKTQKEVHLKNTSRGSAGNKTYRM. Positions 119-153 are disordered; it reads RSIRAQRHTDMPKTQKEVHLKNTSRGSAGNKTYRM. The segment covering 125–138 has biased composition (basic and acidic residues); the sequence is RHTDMPKTQKEVHL. Over residues 139–153 the composition is skewed to polar residues; the sequence is KNTSRGSAGNKTYRM.

It belongs to the insulin family. Forms a ternary complex with IGFR1 and ITGAV:ITGB3. Forms a ternary complex with IGFR1 and ITGA6:ITGB4. Forms a ternary complex with IGFBP3 and ALS.

The protein localises to the secreted. Functionally, the insulin-like growth factors, isolated from plasma, are structurally and functionally related to insulin but have a much higher growth-promoting activity. May be a physiological regulator of [1-14C]-2-deoxy-D-glucose (2DG) transport and glycogen synthesis in osteoblasts. Stimulates glucose transport in bone-derived osteoblastic (PyMS) cells and is effective at much lower concentrations than insulin, not only regarding glycogen and DNA synthesis but also with regard to enhancing glucose uptake. May play a role in synapse maturation. Ca(2+)-dependent exocytosis of IGF1 is required for sensory perception of smell in the olfactory bulb. Acts as a ligand for IGF1R. Binds to the alpha subunit of IGF1R, leading to the activation of the intrinsic tyrosine kinase activity which autophosphorylates tyrosine residues in the beta subunit thus initiating a cascade of down-stream signaling events leading to activation of the PI3K-AKT/PKB and the Ras-MAPK pathways. Binds to integrins ITGAV:ITGB3 and ITGA6:ITGB4. Its binding to integrins and subsequent ternary complex formation with integrins and IGFR1 are essential for IGF1 signaling. Induces the phosphorylation and activation of IGFR1, MAPK3/ERK1, MAPK1/ERK2 and AKT1. As part of the MAPK/ERK signaling pathway, acts as a negative regulator of apoptosis in cardiomyocytes via promotion of STUB1/CHIP-mediated ubiquitination and degradation of ICER-type isoforms of CREM. In Rattus norvegicus (Rat), this protein is Insulin-like growth factor 1.